A 174-amino-acid polypeptide reads, in one-letter code: ATP synthase subunit b, organellar chromatophore (174 aa).

Residues 26 to 46 form a helical membrane-spanning segment; the sequence is LINLIIVIGVLFTFLRGFLGE.

It belongs to the ATPase B chain family. As to quaternary structure, F-type ATPases have 2 components, F(1) - the catalytic core - and F(0) - the membrane proton channel. F(1) has five subunits: alpha(3), beta(3), gamma(1), delta(1), epsilon(1). F(0) has four main subunits: a(1), b(1), b'(1) and c(10-14). The alpha and beta chains form an alternating ring which encloses part of the gamma chain. F(1) is attached to F(0) by a central stalk formed by the gamma and epsilon chains, while a peripheral stalk is formed by the delta, b and b' chains.

It localises to the plastid. Its subcellular location is the organellar chromatophore thylakoid membrane. Functionally, f(1)F(0) ATP synthase produces ATP from ADP in the presence of a proton or sodium gradient. F-type ATPases consist of two structural domains, F(1) containing the extramembraneous catalytic core and F(0) containing the membrane proton channel, linked together by a central stalk and a peripheral stalk. During catalysis, ATP synthesis in the catalytic domain of F(1) is coupled via a rotary mechanism of the central stalk subunits to proton translocation. Component of the F(0) channel, it forms part of the peripheral stalk, linking F(1) to F(0). The polypeptide is ATP synthase subunit b, organellar chromatophore (Paulinella chromatophora).